Here is a 310-residue protein sequence, read N- to C-terminus: Alpha/beta hydrolase domain-containing protein 17A (310 aa).

Residues S190, D255, and H284 each act as charge relay system in the active site. The residue at position 307 (S307) is a Phosphoserine.

Belongs to the AB hydrolase superfamily. ABHD17 family. Post-translationally, palmitoylated on cysteine residues located in a cysteine cluster at the N-terminus which promotes membrane localization. Palmitoylation is required for post-synaptic localization and for depalmitoylating activity towards DLG4/PSD95.

Its subcellular location is the cell membrane. The protein localises to the endosome membrane. The protein resides in the cell projection. It localises to the dendritic spine. It is found in the postsynaptic density membrane. The enzyme catalyses S-hexadecanoyl-L-cysteinyl-[protein] + H2O = L-cysteinyl-[protein] + hexadecanoate + H(+). Functionally, hydrolyzes fatty acids from S-acylated cysteine residues in proteins. Has depalmitoylating activity towards NRAS. Has depalmitoylating activity towards DLG4/PSD95. May have depalmitoylating activity towards MAP6. The chain is Alpha/beta hydrolase domain-containing protein 17A from Bos taurus (Bovine).